A 240-amino-acid polypeptide reads, in one-letter code: Biosynthetic peptidoglycan transglycosylase (240 aa).

A helical membrane pass occupies residues 12–31; that stretch reads ALMWFMVGSVLLVLLLRFVP.

Belongs to the glycosyltransferase 51 family.

The protein resides in the cell inner membrane. It catalyses the reaction [GlcNAc-(1-&gt;4)-Mur2Ac(oyl-L-Ala-gamma-D-Glu-L-Lys-D-Ala-D-Ala)](n)-di-trans,octa-cis-undecaprenyl diphosphate + beta-D-GlcNAc-(1-&gt;4)-Mur2Ac(oyl-L-Ala-gamma-D-Glu-L-Lys-D-Ala-D-Ala)-di-trans,octa-cis-undecaprenyl diphosphate = [GlcNAc-(1-&gt;4)-Mur2Ac(oyl-L-Ala-gamma-D-Glu-L-Lys-D-Ala-D-Ala)](n+1)-di-trans,octa-cis-undecaprenyl diphosphate + di-trans,octa-cis-undecaprenyl diphosphate + H(+). The protein operates within cell wall biogenesis; peptidoglycan biosynthesis. Its function is as follows. Peptidoglycan polymerase that catalyzes glycan chain elongation from lipid-linked precursors. The protein is Biosynthetic peptidoglycan transglycosylase of Pseudomonas fluorescens (strain ATCC BAA-477 / NRRL B-23932 / Pf-5).